A 142-amino-acid polypeptide reads, in one-letter code: Myosin-2 essential light chain (142 aa).

EF-hand domains are found at residues 2–37 (DDLA…LGQN) and 75–110 (HTVE…LGER).

Myosin is a hexamer of 2 heavy chains and 4 light chains (two regulatory light chains and two essential light chains).

Its subcellular location is the cytoplasm. It is found in the cytoskeleton. Functionally, required for cytokinesis and embryo elongation. May regulate myosin II complex formation and/or the association of myosin with actin. May be involved in the organization of mlc-4 and nmy-2 into bundles. This Caenorhabditis elegans protein is Myosin-2 essential light chain.